Reading from the N-terminus, the 120-residue chain is NAD(P)H-quinone oxidoreductase subunit 3 (120 aa).

Helical transmembrane passes span glycine 6–valine 26, methionine 64–valine 84, and leucine 89–alanine 109.

It belongs to the complex I subunit 3 family. NDH-1 can be composed of about 15 different subunits; different subcomplexes with different compositions have been identified which probably have different functions.

The protein resides in the cellular thylakoid membrane. The enzyme catalyses a plastoquinone + NADH + (n+1) H(+)(in) = a plastoquinol + NAD(+) + n H(+)(out). The catalysed reaction is a plastoquinone + NADPH + (n+1) H(+)(in) = a plastoquinol + NADP(+) + n H(+)(out). Its function is as follows. NDH-1 shuttles electrons from an unknown electron donor, via FMN and iron-sulfur (Fe-S) centers, to quinones in the respiratory and/or the photosynthetic chain. The immediate electron acceptor for the enzyme in this species is believed to be plastoquinone. Couples the redox reaction to proton translocation, and thus conserves the redox energy in a proton gradient. Cyanobacterial NDH-1 also plays a role in inorganic carbon-concentration. The chain is NAD(P)H-quinone oxidoreductase subunit 3 from Prochlorococcus marinus (strain MIT 9313).